The chain runs to 323 residues: Glyoxylate/hydroxypyruvate reductase B (323 aa).

Catalysis depends on residues arginine 237 and glutamate 266. Histidine 285 serves as the catalytic Proton donor.

It belongs to the D-isomer specific 2-hydroxyacid dehydrogenase family. GhrB subfamily. As to quaternary structure, homodimer.

Its subcellular location is the cytoplasm. It catalyses the reaction glycolate + NADP(+) = glyoxylate + NADPH + H(+). It carries out the reaction (R)-glycerate + NAD(+) = 3-hydroxypyruvate + NADH + H(+). The enzyme catalyses (R)-glycerate + NADP(+) = 3-hydroxypyruvate + NADPH + H(+). Its function is as follows. Catalyzes the NADPH-dependent reduction of glyoxylate and hydroxypyruvate into glycolate and glycerate, respectively. This is Glyoxylate/hydroxypyruvate reductase B from Klebsiella pneumoniae (strain 342).